The sequence spans 87 residues: Phosphoribosyl-ATP pyrophosphatase (87 aa).

It belongs to the PRA-PH family.

The protein localises to the cytoplasm. It catalyses the reaction 1-(5-phospho-beta-D-ribosyl)-ATP + H2O = 1-(5-phospho-beta-D-ribosyl)-5'-AMP + diphosphate + H(+). It functions in the pathway amino-acid biosynthesis; L-histidine biosynthesis; L-histidine from 5-phospho-alpha-D-ribose 1-diphosphate: step 2/9. The chain is Phosphoribosyl-ATP pyrophosphatase from Saccharopolyspora erythraea (strain ATCC 11635 / DSM 40517 / JCM 4748 / NBRC 13426 / NCIMB 8594 / NRRL 2338).